We begin with the raw amino-acid sequence, 87 residues long: Large ribosomal subunit protein bL28 (87 aa).

It belongs to the bacterial ribosomal protein bL28 family.

The chain is Large ribosomal subunit protein bL28 from Akkermansia muciniphila (strain ATCC BAA-835 / DSM 22959 / JCM 33894 / BCRC 81048 / CCUG 64013 / CIP 107961 / Muc).